The chain runs to 235 residues: Probable Ni/Fe-hydrogenase 1 B-type cytochrome subunit (235 aa).

Topologically, residues 1 to 19 (MQQKSDNVVSHYVFEAPVR) are cytoplasmic. A helical transmembrane segment spans residues 20–40 (IWHWLTVLCMAVLMVTGYFIG). Topologically, residues 41–63 (KPLPSVSGEATYLFYMGYIRLIH) are periplasmic. Residues 64–84 (FSAGMVFTVVLLMRIYWAFVG) form a helical membrane-spanning segment. The Cytoplasmic portion of the chain corresponds to 85-130 (NRYSRELFIVPVWRKSWWQGVWYEIRWYLFLAKRPSADIGHNPIAQ). A helical membrane pass occupies residues 131–151 (AAMFGYFLMSVFMIITGFALY). At 152-185 (SEHSQYAIFAPFRYVVEFFYWTGGNSMDIHSWHR) the chain is on the periplasmic side. Residues 186-203 (LGMWLIGAFVIGHVYMAL) form a helical membrane-spanning segment. The Cytoplasmic segment spans residues 204–235 (REDIMSDDTVISTMVNGYRSHKFGKISNKERS).

The protein belongs to the HupC/HyaC/HydC family.

It is found in the cell inner membrane. In terms of biological role, probable b-type cytochrome. The protein is Probable Ni/Fe-hydrogenase 1 B-type cytochrome subunit (hyaC) of Escherichia coli O157:H7.